A 462-amino-acid chain; its full sequence is GTPase HflX (462 aa).

A Hflx-type G domain is found at 255–452 (PAVGIVGYTN…LLEEKIYNLP (198 aa)). GTP is bound by residues 261-268 (GYTNAGKS), 286-290 (FATLD), 308-311 (DTVG), 374-377 (NKID), and 430-432 (SAY). Residues serine 268 and threonine 288 each coordinate Mg(2+).

The protein belongs to the TRAFAC class OBG-HflX-like GTPase superfamily. HflX GTPase family. Monomer. Associates with the 50S ribosomal subunit. Mg(2+) serves as cofactor.

The protein localises to the cytoplasm. Its function is as follows. GTPase that associates with the 50S ribosomal subunit and may have a role during protein synthesis or ribosome biogenesis. In Leptospira borgpetersenii serovar Hardjo-bovis (strain JB197), this protein is GTPase HflX.